Consider the following 156-residue polypeptide: ATP synthase subunit b (156 aa).

A helical membrane pass occupies residues 7–29; that stretch reads LLGQAISFGMFVWFCMKYVWPPI.

Belongs to the ATPase B chain family. F-type ATPases have 2 components, F(1) - the catalytic core - and F(0) - the membrane proton channel. F(1) has five subunits: alpha(3), beta(3), gamma(1), delta(1), epsilon(1). F(0) has three main subunits: a(1), b(2) and c(10-14). The alpha and beta chains form an alternating ring which encloses part of the gamma chain. F(1) is attached to F(0) by a central stalk formed by the gamma and epsilon chains, while a peripheral stalk is formed by the delta and b chains.

It localises to the cell inner membrane. Functionally, f(1)F(0) ATP synthase produces ATP from ADP in the presence of a proton or sodium gradient. F-type ATPases consist of two structural domains, F(1) containing the extramembraneous catalytic core and F(0) containing the membrane proton channel, linked together by a central stalk and a peripheral stalk. During catalysis, ATP synthesis in the catalytic domain of F(1) is coupled via a rotary mechanism of the central stalk subunits to proton translocation. In terms of biological role, component of the F(0) channel, it forms part of the peripheral stalk, linking F(1) to F(0). The chain is ATP synthase subunit b from Vibrio cholerae serotype O1 (strain ATCC 39541 / Classical Ogawa 395 / O395).